Consider the following 65-residue polypeptide: Small ribosomal subunit protein bS21 (65 aa).

Positions 45–65 (GRLKRSRSRRRAQRANEERNS) are disordered. The span at 48-57 (KRSRSRRRAQ) shows a compositional bias: basic residues.

The protein belongs to the bacterial ribosomal protein bS21 family.

This Pelodictyon phaeoclathratiforme (strain DSM 5477 / BU-1) protein is Small ribosomal subunit protein bS21.